The sequence spans 366 residues: RNA 3'-terminal phosphate cyclase (366 aa).

ATP-binding residues include glutamine 104, proline 131, tyrosine 294, aspartate 297, glutamine 298, and histidine 320. Histidine 320 (tele-AMP-histidine intermediate) is an active-site residue.

It belongs to the RNA 3'-terminal cyclase family. Type 1 subfamily.

The protein localises to the nucleus. The protein resides in the nucleoplasm. It catalyses the reaction a 3'-end 3'-phospho-ribonucleotide-RNA + ATP = a 3'-end 2',3'-cyclophospho-ribonucleotide-RNA + AMP + diphosphate. In terms of biological role, catalyzes the conversion of 3'-phosphate to a 2',3'-cyclic phosphodiester at the end of RNA. The mechanism of action of the enzyme occurs in 3 steps: (A) adenylation of the enzyme by ATP; (B) transfer of adenylate to an RNA-N3'P to produce RNA-N3'PP5'A; (C) and attack of the adjacent 2'-hydroxyl on the 3'-phosphorus in the diester linkage to produce the cyclic end product. Likely functions in some aspects of cellular RNA processing. Function plays an important role in regulating axon regeneration by inhibiting central nervous system (CNS) axon regeneration following optic nerve injury. The chain is RNA 3'-terminal phosphate cyclase (RTCA) from Macaca fascicularis (Crab-eating macaque).